Reading from the N-terminus, the 175-residue chain is Ribosome maturation factor RimM (175 aa).

The PRC barrel domain occupies 95–175 (SEDEFYWREL…RIEVDWDPGF (81 aa)).

It belongs to the RimM family. As to quaternary structure, binds ribosomal protein uS19.

It is found in the cytoplasm. An accessory protein needed during the final step in the assembly of 30S ribosomal subunit, possibly for assembly of the head region. Essential for efficient processing of 16S rRNA. May be needed both before and after RbfA during the maturation of 16S rRNA. It has affinity for free ribosomal 30S subunits but not for 70S ribosomes. This chain is Ribosome maturation factor RimM, found in Aliivibrio salmonicida (strain LFI1238) (Vibrio salmonicida (strain LFI1238)).